Consider the following 314-residue polypeptide: ATP synthase gamma chain (314 aa).

This sequence belongs to the ATPase gamma chain family. F-type ATPases have 2 components, CF(1) - the catalytic core - and CF(0) - the membrane proton channel. CF(1) has five subunits: alpha(3), beta(3), gamma(1), delta(1), epsilon(1). CF(0) has three main subunits: a, b and c.

It is found in the cell membrane. Produces ATP from ADP in the presence of a proton gradient across the membrane. The gamma chain is believed to be important in regulating ATPase activity and the flow of protons through the CF(0) complex. In Lactiplantibacillus plantarum (strain ATCC BAA-793 / NCIMB 8826 / WCFS1) (Lactobacillus plantarum), this protein is ATP synthase gamma chain.